A 226-amino-acid polypeptide reads, in one-letter code: Ribonuclease 3 (226 aa).

The region spanning 6–128 (FNKLQKKMGY…IIGGIFLDSN (123 aa)) is the RNase III domain. E41 contacts Mg(2+). Residue D45 is part of the active site. Residues N114 and E117 each coordinate Mg(2+). The active site involves E117. Residues 155–225 (DPKTRLQEYL…AKQALLLFNI (71 aa)) enclose the DRBM domain.

This sequence belongs to the ribonuclease III family. In terms of assembly, homodimer. It depends on Mg(2+) as a cofactor.

The protein resides in the cytoplasm. The catalysed reaction is Endonucleolytic cleavage to 5'-phosphomonoester.. In terms of biological role, digests double-stranded RNA. Involved in the processing of primary rRNA transcript to yield the immediate precursors to the large and small rRNAs (23S and 16S). Processes some mRNAs, and tRNAs when they are encoded in the rRNA operon. Processes pre-crRNA and tracrRNA of type II CRISPR loci if present in the organism. The polypeptide is Ribonuclease 3 (Wigglesworthia glossinidia brevipalpis).